Consider the following 126-residue polypeptide: Holo-[acyl-carrier-protein] synthase (126 aa).

The Mg(2+) site is built by D9 and E58.

Belongs to the P-Pant transferase superfamily. AcpS family. Mg(2+) is required as a cofactor.

It localises to the cytoplasm. It carries out the reaction apo-[ACP] + CoA = holo-[ACP] + adenosine 3',5'-bisphosphate + H(+). Its function is as follows. Transfers the 4'-phosphopantetheine moiety from coenzyme A to a Ser of acyl-carrier-protein. The sequence is that of Holo-[acyl-carrier-protein] synthase from Serratia proteamaculans (strain 568).